The primary structure comprises 2602 residues: Filamin-B (2602 aa).

The actin-binding stretch occupies residues 1–239 (MPVTEKDLAE…VMTYLSQFPK (239 aa)). 2 Calponin-homology (CH) domains span residues 16-122 (KIQQ…LHYS) and 139-242 (QTPK…KAKL). A Phosphothreonine modification is found at Thr-216. Residues 244-267 (PGAPLKPKLNPKKARAYGRGIEPT) form a disordered region. Filamin repeat units follow at residues 249–347 (KPKL…EVNV), 349–446 (KAQG…GVQI), 447–543 (GEAC…EVQV), 544–636 (GPEA…MAFI), 640–736 (TGDY…RVNI), 737–839 (GQGS…RVKV), 840–938 (DPSH…TVGV), 939–1034 (AAPL…TVEA), 1035–1127 (SLPP…KADI), 1128–1222 (EMPF…WVKV), 1223–1322 (EPAI…KVAV), 1323–1415 (TEGC…RVPS), 1416–1511 (KDVV…KVKV), 1512–1608 (LPTY…RIRA), and 1609–1704 (TQTG…TVMA). Residue Thr-519 is modified to Phosphothreonine. N6-acetyllysine is present on Lys-681. Ser-730 bears the Phosphoserine mark. Basic and acidic residues predominate over residues 837–850 (VKVDPSHDASKVKA). Residues 837 to 862 (VKVDPSHDASKVKAEGPGLSKAGVEN) form a disordered region. Phosphoserine is present on residues Ser-886, Ser-932, Ser-983, and Ser-1028. Position 1307 is a phosphothreonine (Thr-1307). Ser-1316 bears the Phosphoserine mark. 3 positions are modified to phosphoserine: Ser-1433, Ser-1505, and Ser-1602. The hinge 1 stretch occupies residues 1705 to 1728 (TDGEVTAMEEAPVNACPPGFRPWV). 8 Filamin repeats span residues 1729 to 1813 (TEEA…SPLQ), 1816 to 1908 (VNYP…TAKI), 1919 to 1994 (KLGS…SIMV), 1997 to 2089 (SEIG…TVKI), 2091 to 2185 (GEGR…QFTV), 2188 to 2280 (LGEG…LVPV), 2282 to 2375 (APSD…KVRV), and 2379 to 2471 (GQAG…KAKV). Position 1780 is an N6-acetyllysine (Lys-1780). Phosphoserine occurs at positions 2083 and 2113. Residues Ser-2369 and Ser-2465 each carry the phosphoserine modification. Lys-2468 participates in a covalent cross-link: Glycyl lysine isopeptide (Lys-Gly) (interchain with G-Cter in ISG15). The interval 2472-2506 (TGQRLVSPGSANETSSILVESVTRSSTETCYSAIP) is hinge 2. A self-association site, tail region spans residues 2472–2602 (TGQRLVSPGS…PGSPFHVTVP (131 aa)). 3 positions are modified to phosphoserine: Ser-2478, Ser-2481, and Ser-2492. The stretch at 2507–2601 (KSSSDASKVT…IPGSPFHVTV (95 aa)) is one Filamin 24 repeat. N6-succinyllysine is present on residues Lys-2518 and Lys-2524. Lys-2576 is modified (N6-acetyllysine).

This sequence belongs to the filamin family. In terms of assembly, homodimer. Interacts with FLNA, FLNC, INPPL1, ITGB1A, ITGB1D, ITGB3, ITGB6, MYOT, MYOZ1, PSEN1 and PSEN2. Interacts with MICALL2. Interacts with RFLNA and RFLNB. Interacts with ASB2 isoform 1; the interaction targets FLNB for proteasomal degradation. Post-translationally, ISGylation prevents ability to interact with the upstream activators of the JNK cascade and inhibits IFNA-induced JNK signaling. In terms of processing, ubiquitination by a SCF-like complex containing ASB2 isoform 1 leads to proteasomal degradation which promotes muscle differentiation. In terms of tissue distribution, expressed in hippocampus, cortex, cerebellar Purkinje cells and granule cell layers.

The protein localises to the cytoplasm. It is found in the cell cortex. Its subcellular location is the cytoskeleton. The protein resides in the stress fiber. It localises to the myofibril. The protein localises to the sarcomere. It is found in the z line. In terms of biological role, connects cell membrane constituents to the actin cytoskeleton. May promote orthogonal branching of actin filaments and links actin filaments to membrane glycoproteins. Anchors various transmembrane proteins to the actin cytoskeleton. This Mus musculus (Mouse) protein is Filamin-B (Flnb).